Consider the following 89-residue polypeptide: Repressor protein (89 aa).

Residues 29–52 (SGDIARNTGYSRRRISDRCTVLVD) constitute a DNA-binding region (H-T-H motif).

Functionally, transcriptional repressor expressed under lysogenic conditions, which specifically binds the host DNA site 'RRGAAG'. The binding occurs cooperatively, probably as 2 copies of a dimer. Possibly prevents RNA polymerase access to the promoters for lytic cell cycle transcription. This is Repressor protein (T6) from Halobacterium salinarum (Halobacterium halobium).